A 325-amino-acid chain; its full sequence is Probable tRNA pseudouridine synthase B (325 aa).

The active-site Nucleophile is the Asp-71. The PUA domain maps to 238-313 (LPKIYVKDSA…VAASIERVIM (76 aa)).

This sequence belongs to the pseudouridine synthase TruB family. Type 2 subfamily.

It carries out the reaction uridine(55) in tRNA = pseudouridine(55) in tRNA. Its function is as follows. Could be responsible for synthesis of pseudouridine from uracil-55 in the psi GC loop of transfer RNAs. The sequence is that of Probable tRNA pseudouridine synthase B from Korarchaeum cryptofilum (strain OPF8).